The chain runs to 155 residues: Mediator of RNA polymerase II transcription subunit 21 (155 aa).

The tract at residues 29–73 (QAPPSVPPGQHRVDTMPEIKGKAASENPQSNPPQPAEPPVPEKIS) is disordered. Residues 39–51 (HRVDTMPEIKGKA) are compositionally biased toward basic and acidic residues. Positions 58-69 (SNPPQPAEPPVP) are enriched in pro residues. A coiled-coil region spans residues 75 to 147 (EQFNQDLKEF…EVLLKKVEDK (73 aa)).

Belongs to the Mediator complex subunit 21 family. In terms of assembly, component of the Mediator complex.

The protein resides in the nucleus. Functionally, component of the Mediator complex, a coactivator involved in the regulated transcription of nearly all RNA polymerase II-dependent genes. Mediator functions as a bridge to convey information from gene-specific regulatory proteins to the basal RNA polymerase II transcription machinery. Mediator is recruited to promoters by direct interactions with regulatory proteins and serves as a scaffold for the assembly of a functional preinitiation complex with RNA polymerase II and the general transcription factors. The chain is Mediator of RNA polymerase II transcription subunit 21 (SRB7) from Phaeosphaeria nodorum (strain SN15 / ATCC MYA-4574 / FGSC 10173) (Glume blotch fungus).